A 282-amino-acid polypeptide reads, in one-letter code: Secretory carrier-associated membrane protein 1 (282 aa).

Residues 1–49 are disordered; the sequence is MSRYQSHSFDDGEINPFANPTSVPAATSKLSPLPPEPYDRGATMDIPLD. Topologically, residues 1–117 are cytoplasmic; that stretch reads MSRYQSHSFD…EIPIHLQRIQ (117 aa). Residues 18–30 show a composition bias toward polar residues; that stretch reads ANPTSVPAATSKL. Ser-31 carries the post-translational modification Phosphoserine. Positions 48 to 93 form a coiled coil; that stretch reads LDSGKDLKAKEKELREKEAELKRREQEIKRKEDAIAQAGIVIEEKN. The next 4 helical transmembrane spans lie at 118–138, 150–170, 185–205, and 233–253; these read YVAFTSMLGLVVCLLWNIVAV, IWFLAIIYFISGVPGAYVMWY, FGWFFFTYLFHIAFCVFAAVA, and IFYFIGFGFFCLESLVSIWVI. The Cytoplasmic portion of the chain corresponds to 254 to 282; it reads QQVYMYFRGSGKAAEMKQEATRRAMMAAL.

This sequence belongs to the SCAMP family.

Its subcellular location is the cell membrane. The protein resides in the cytoplasmic vesicle. It is found in the secretory vesicle membrane. Probably involved in membrane trafficking. The protein is Secretory carrier-associated membrane protein 1 (SCAMP1) of Arabidopsis thaliana (Mouse-ear cress).